The sequence spans 434 residues: Protein ENHANCED PSEUDOMONAS SUSCEPTIBILITY 1 (434 aa).

The active-site Proton acceptor is the Asp376.

It belongs to the plant acyltransferase family.

Required for pathogen-induced salicylic acid (SA) accumulation and SA-mediated resistance to virulent and avirulent pathogens (e.g. P.syringae). The protein is Protein ENHANCED PSEUDOMONAS SUSCEPTIBILITY 1 of Arabidopsis thaliana (Mouse-ear cress).